A 398-amino-acid polypeptide reads, in one-letter code: MLSPNLTIVKNLPLKKRICFLLKLVCFVSSVLIFCEFFIYYLVIFQCRWPDVKRDAHTGNEETPASVLKAMFLADTHLLGEIKGHWLDKLRREWQMERSFQTALWLLQPDIVFILGDVFDEGKWDSPQAWADDVRRFQKMFKYPVTTELVVIVGNHDIGFHYEMTTYKVHRFEKVFNFTSGKLITRKGTNFVLVNSVAMEGDGCTLCRTAEAKLVALSHRLNCSLQEPNHPQKRCSDAEKPPASQPILLQHYPLYRKSDAECSGEDAAPPEEKNIPFKEKYDVLSQEASQKLLWWFRPRLILSGHTHSACQVLHTGGIPEISIPSFSWRNRNNPSFIMGSITPTDFSLHKCFLPRESRVFAIYWAAGALLVVLVLAHFQLLTPPFYFAQRLISKHKAA.

A helical membrane pass occupies residues 25–45 (VCFVSSVLIFCEFFIYYLVIF). Asp75, Asp117, Asn155, His251, His305, and His307 together coordinate a divalent metal cation. Residues 359 to 379 (VFAIYWAAGALLVVLVLAHFQ) form a helical membrane-spanning segment. The short motif at 394–398 (KHKAA) is the Di-lysine motif element.

The protein belongs to the metallophosphoesterase superfamily. MPPE1 family. Mn(2+) is required as a cofactor.

It is found in the endoplasmic reticulum-Golgi intermediate compartment membrane. Functionally, metallophosphoesterase that catalyzes the removal of a side-chain ethanolamine-phosphate (EtNP) from the second mannose of the GPI-anchor protein intermediate. Participates in the glycan remodeling steps of GPI-anchor maturation to allow an efficient transport of GPI-anchor proteins from the endoplasmic reticulum to the Golgi. The sequence is that of Metallophosphoesterase 1 from Gallus gallus (Chicken).